The sequence spans 393 residues: Beta-ureidopropionase (393 aa).

One can recognise a CN hydrolase domain in the interval 72 to 344 (VRVGLVQNRI…DGLLVTELNL (273 aa)). The Proton acceptor role is filled by glutamate 119. The Proton donor role is filled by lysine 196. The active-site Nucleophile is the cysteine 233. Serine 378 bears the Phosphoserine mark.

This sequence belongs to the carbon-nitrogen hydrolase superfamily. BUP family. Homodimer, homotetramer, homooctamer; can also form higher homooligomers.

It localises to the cytoplasm. It carries out the reaction 3-(carbamoylamino)propanoate + H2O + 2 H(+) = beta-alanine + NH4(+) + CO2. It catalyses the reaction 3-(carbamoylamino)-2-methylpropanoate + H2O + 2 H(+) = (R)-3-amino-2-methylpropanoate + NH4(+) + CO2. It functions in the pathway amino-acid biosynthesis; beta-alanine biosynthesis. In terms of biological role, catalyzes a late step in pyrimidine degradation. Converts N-carbamoyl-beta-alanine (3-ureidopropanoate) into beta-alanine, ammonia and carbon dioxide. Likewise, converts N-carbamoyl-beta-aminoisobutyrate (3-ureidoisobutyrate) into beta-aminoisobutyrate, ammonia and carbon dioxide. The sequence is that of Beta-ureidopropionase (Upb1) from Mus musculus (Mouse).